The following is a 405-amino-acid chain: Protein NCA1 (405 aa).

The segment at 1 to 85 is disordered; the sequence is MTTTSVCPFS…GNLNKDSTDS (85 aa). Composition is skewed to basic and acidic residues over residues 13–24 and 37–48; these read ARPDDGSTRKQG and ARPDDASARKQG. Positions 76-85 are enriched in polar residues; it reads GNLNKDSTDS. The RING-type zinc-finger motif lies at 108–142; sequence CMLCQALLYESSRCVPCTHVFCKVCLTRFKDCPLC. TPR repeat units lie at residues 247-280 and 292-325; these read GAVLGMLGDCSRAMGDSSSAVKHFEESVEFLMKL and SVSLNKIGDLKYYDEDLQAARSYYDRALNVRRDA.

Interacts with the catalases CAT1, CAT2 and CAT3. This interaction is not induced by alkaline stress or H(2)O(2) and NaCl treatments. As to expression, expressed in roots, stems, leaves, flowers and siliques.

Its subcellular location is the cytoplasm. The protein resides in the nucleus. Has holdase chaperone activity that may fold catalase to a functional structure. Not required for the peroxisome import of catalases. Required for the activity of catalases and acts mainly at the post-transcriptional level. The sequence is that of Protein NCA1 from Arabidopsis thaliana (Mouse-ear cress).